A 210-amino-acid chain; its full sequence is Fibrillarin-like rRNA/tRNA 2'-O-methyltransferase (210 aa).

Residues 72–73 (TT), 88–89 (EF), 113–114 (DA), and 134–137 (DVAT) contribute to the S-adenosyl-L-methionine site.

It belongs to the methyltransferase superfamily. Fibrillarin family. Interacts with nop5. Component of box C/D small ribonucleoprotein (sRNP) particles that contain rpl7ae, FlpA and nop5, plus a guide RNA.

Functionally, involved in pre-rRNA and tRNA processing. Utilizes the methyl donor S-adenosyl-L-methionine to catalyze the site-specific 2'-hydroxyl methylation of ribose moieties in rRNA and tRNA. Site specificity is provided by a guide RNA that base pairs with the substrate. Methylation occurs at a characteristic distance from the sequence involved in base pairing with the guide RNA. The chain is Fibrillarin-like rRNA/tRNA 2'-O-methyltransferase from Halobacterium salinarum (strain ATCC 29341 / DSM 671 / R1).